A 356-amino-acid polypeptide reads, in one-letter code: Guanine nucleotide-binding protein alpha-2 subunit (356 aa).

The segment at 1 to 25 (MGLCQSEEEKVGSQKSRAIDKEIKQ) is disordered. A lipid anchor (N-myristoyl glycine) is attached at G2. C4 is lipidated: S-palmitoyl cysteine. Positions 7 to 25 (EEEKVGSQKSRAIDKEIKQ) are enriched in basic and acidic residues. One can recognise a G-alpha domain in the interval 14–338 (QKSRAIDKEI…TDTNQVQKIL (325 aa)). Residues 17–30 (RAIDKEIKQNQSND) form a G1 motif region. Residues Q25, Q27, S28, N29, D30, V135, E160, A166, V188, E254, S255, C257, and F310 each contribute to the GTP site. N29 contacts Mg(2+). The G2 motif stretch occupies residues 158-166 (FFENLDRIA). A166 is a binding site for Mg(2+). Positions 181–190 (RTKTTGIVEV) are G3 motif. The interval 250-257 (MRLFESIC) is G4 motif. The segment at 308–313 (QKFEAL) is G5 motif.

Belongs to the G-alpha family. G(q) subfamily. In terms of assembly, g proteins are composed of 3 units; alpha, beta and gamma. The alpha chain contains the guanine nucleotide binding site. Requires Mg(2+) as cofactor.

Guanine nucleotide-binding proteins (G proteins) are involved as modulators or transducers in various transmembrane signaling systems. Involved in behavioral responses to P.aeruginosa by controlling the expression of daf-7, a member of the TGF-beta family, in ASJ sensory neurons. The polypeptide is Guanine nucleotide-binding protein alpha-2 subunit (gpa-2) (Caenorhabditis briggsae).